The primary structure comprises 105 residues: RxLR effector protein PITG_18670 (105 aa).

Residues 1 to 21 form the signal peptide; that stretch reads MRSIFYFALAFAALTCSNASA. The RxLR-dEER motif lies at 39-57; it reads RSLRVAGQEVARGDRGEEI.

Belongs to the RxLR effector family.

Its subcellular location is the secreted. The protein localises to the host nucleus. The protein resides in the host nucleolus. It is found in the host cytoplasm. Its function is as follows. Effector that enhances P.infestans colonization of Nicotiana benthamiana leaves. The chain is RxLR effector protein PITG_18670 from Phytophthora infestans (strain T30-4) (Potato late blight agent).